We begin with the raw amino-acid sequence, 431 residues long: MAKLLRLNAIDGDMPGAGEADLFTLAPGGKAYVPFAWGSRVLGCKPPPAHGAARERGSVSLRPHQKGVLKEAWGHVTSKGYCMLKCPPGFGKTFMALELWRRLGLPALVLTNRRVLATQWRDSATRFLPDSRVFTSGTPPPDALPRDLYVTGPASLRNRRIKAKDSPAKFLLIVDEAHQLTSPVSCRVLLSVRPSHLLGLSATPMRYDDYHAALGAFFGREDSTVDRVDPRPHEVEILSTGVHIEPEFSKITGKMDWNSVIKAQSDNPERDAALADRMLLRPDVKWLVLCKRVDHVKRMAETLSSRSGKKVDVLHGSKDEWDRDAWCVVGTYSKAGTGFDACERTGLCLAADVDRYFEQCLGRLRANGGTVLDPVDDLGVLRKHSKNREAVYIAAGCTIKKTKCDASRPSQSTPTPTGSSQPAPRTRRPQR.

In terms of domain architecture, Helicase ATP-binding spans 73–222 (WGHVTSKGYC…ALGAFFGRED (150 aa)). 86–93 (CPPGFGKT) is a binding site for ATP. Residues 175-178 (DEAH) carry the DEAH box motif. The disordered stretch occupies residues 403–431 (KCDASRPSQSTPTPTGSSQPAPRTRRPQR). Residues 407 to 424 (SRPSQSTPTPTGSSQPAP) are compositionally biased toward low complexity.

This is Putative helicase 055L from Frog virus 3 (isolate Goorha) (FV-3).